The sequence spans 341 residues: Phosphoribosylformylglycinamidine cyclo-ligase (341 aa).

This sequence belongs to the AIR synthase family.

The protein localises to the cytoplasm. It catalyses the reaction 2-formamido-N(1)-(5-O-phospho-beta-D-ribosyl)acetamidine + ATP = 5-amino-1-(5-phospho-beta-D-ribosyl)imidazole + ADP + phosphate + H(+). It functions in the pathway purine metabolism; IMP biosynthesis via de novo pathway; 5-amino-1-(5-phospho-D-ribosyl)imidazole from N(2)-formyl-N(1)-(5-phospho-D-ribosyl)glycinamide: step 2/2. The chain is Phosphoribosylformylglycinamidine cyclo-ligase from Xanthomonas axonopodis pv. citri (strain 306).